Consider the following 171-residue polypeptide: Myelin basic protein (171 aa).

N-acetylalanine is present on Ala-1. Residues 1–12 (ASQKRPSQRHGS) are compositionally biased toward basic residues. Residues 1-171 (ASQKRPSQRH…SRSGSPMARR (171 aa)) form a disordered region. Phosphoserine occurs at positions 7 and 12. A Phosphotyrosine modification is found at Tyr-14. Ser-19 is modified (phosphoserine). The residue at position 20 (Thr-20) is a Phosphothreonine. Residues Arg-25 and Arg-31 each carry the citrulline modification. Thr-35 is modified (phosphothreonine). At Ser-39 the chain carries Phosphoserine. Omega-N-methylarginine occurs at positions 42 and 48. Ser-55 is subject to Phosphoserine. Thr-66 is modified (phosphothreonine). Tyr-68 is modified (phosphotyrosine). Phosphothreonine occurs at positions 95 and 98. Deamidated glutamine is present on Gln-103. Arg-107 carries the post-translational modification Omega-N-methylarginine; alternate. Arg-107 is subject to Symmetric dimethylarginine; alternate. Ser-115 is modified (phosphoserine). Lys-122 carries the N6-acetyllysine modification. Arg-130 carries the post-translational modification Citrulline. Gln-148 carries the deamidated glutamine modification. A Citrulline modification is found at Arg-160. Position 162 is a phosphoserine (Ser-162). Ser-166 carries the post-translational modification Phosphoserine; by UHMK1. Citrulline is present on Arg-171.

It belongs to the myelin basic protein family. In terms of assembly, homodimer. As in other animals, several charge isomers may be produced as a result of optional post-translational modifications, such as phosphorylation of serine or threonine residues, deamidation of glutamine or asparagine residues, citrullination and methylation of arginine residues. In terms of processing, phosphorylated by TAOK2, VRK2, MAPK11, MAPK12, MAPK14 and MINK1. Post-translationally, proteolytically cleaved in B cell lysosomes by cathepsin CTSG which degrades the major immunogenic MBP epitope and prevents the activation of MBP-specific autoreactive T cells.

The protein localises to the myelin membrane. Is, with PLP, the most abundant protein component of the myelin membrane in the CNS. Has a role in both the formation and stabilization of this compact multilayer arrangement of bilayers. Each splice variant and charge isomer may have a specialized function in the assembly of an optimized, biochemically functional myelin membrane. The chain is Myelin basic protein (MBP) from Sus scrofa (Pig).